Here is an 811-residue protein sequence, read N- to C-terminus: Lysine-specific histone demethylase 1 homolog 3 (811 aa).

Over residues 1–10 (MSDQPPPYTP) the composition is skewed to pro residues. The segment at 1-79 (MSDQPPPYTP…PSAQPPPRAS (79 aa)) is disordered. Basic residues predominate over residues 44 to 55 (NKRKRTGFRRKL). Over residues 56-71 (PSGSPAAPVAVAASPS) the composition is skewed to low complexity. Residues 88–189 (NREPTAEAVT…FGVAPAIKER (102 aa)) enclose the SWIRM domain. Glutamate 227, arginine 229, arginine 235, and glutamate 609 together coordinate FAD. Residues 790–811 (RNSSRTKTRPSKLKIGIPKSKS) are disordered.

Belongs to the flavin monoamine oxidase family. The cofactor is FAD.

Its function is as follows. Probable histone demethylase. The chain is Lysine-specific histone demethylase 1 homolog 3 from Oryza sativa subsp. indica (Rice).